The primary structure comprises 271 residues: Aquaporin-1 (271 aa).

The Cytoplasmic portion of the chain corresponds to 1–11 (MASEFKKKLFW). The chain crosses the membrane as a helical span at residues 12–29 (RAVVAEFLAMILFVFISI). At 30–48 (GSALGFNYPVRNNQTAGAA) the chain is on the extracellular side. Asn42 is a glycosylation site (N-linked (GlcNAc...) asparagine). The chain crosses the membrane as a helical span at residues 49-67 (QDNVKVSLAFGLSIATLAQ). Topologically, residues 68-70 (SVG) are cytoplasmic. The stretch at 71 to 84 (HISGAHLNPAVTLG) is an intramembrane region. The NPA 1 signature appears at 78–80 (NPA). The Cytoplasmic segment spans residues 85-92 (LLLSCQIS). Residues 93–111 (ILRAVMYIIAQCVGAIVAT) form a helical membrane-spanning segment. The Extracellular portion of the chain corresponds to 112 to 135 (AILSGITSSLPDNSLGRNELAPGV). A helical membrane pass occupies residues 136 to 155 (NSGQGLGIEIIGTLQLVLCV). At 156-165 (LATTDRRRRD) the chain is on the cytoplasmic side. The helical transmembrane segment at 166 to 183 (LGGSGPLAIGLSVALGHL) threads the bilayer. Residues 184–188 (LAIDY) lie on the Extracellular side of the membrane. Residues 189-201 (TGCGINPARSFGS) lie within the membrane without spanning it. Residues 194–196 (NPA) carry the NPA 2 motif. Over 202–208 (SVITHNF) the chain is Extracellular. Residues 209–226 (KDHWIFWVGPFIGGALAV) traverse the membrane as a helical segment. The Cytoplasmic portion of the chain corresponds to 227–271 (LIYDFILAPRSSDLTDRVKVWTSGQVEEYELDGDDINSRVEMKPK). Ser249 carries the post-translational modification Phosphoserine. The residue at position 255 (Tyr255) is a Phosphotyrosine. Ser264 carries the phosphoserine modification.

It belongs to the MIP/aquaporin (TC 1.A.8) family. As to quaternary structure, homotetramer; each monomer provides an independent water pore. Component of the ankyrin-1 complex in the erythrocyte, composed of ANK1, RHCE, RHAG, SLC4A1, EPB42, GYPA, GYPB and AQP1. Interacts with EPHB2; involved in endolymph production in the inner ear. Identified in a complex with STOM. Interacts (via the N-terminal) with ANK1 (via ANK 1-5 repeats). Interacts (via the C-terminal) with EPB42.

It localises to the cell membrane. It catalyses the reaction H2O(in) = H2O(out). The catalysed reaction is nitric oxide(out) = nitric oxide(in). It carries out the reaction CO2(out) = CO2(in). The enzyme catalyses glycerol(in) = glycerol(out). It catalyses the reaction H2O2(out) = H2O2(in). The catalysed reaction is K(+)(in) = K(+)(out). It carries out the reaction Na(+)(in) = Na(+)(out). Functionally, forms a water channel that facilitates the transport of water across cell membranes, playing a crucial role in water homeostasis in various tissues. Could also be permeable to small solutes including hydrogen peroxide, glycerol and gases such as amonnia (NH3), nitric oxide (NO) and carbon dioxide (CO2). Recruited to the ankyrin-1 complex, a multiprotein complex of the erythrocyte membrane, it could be part of a CO2 metabolon, linking facilitated diffusion of CO2 across the membrane, anion exchange of Cl(-)/HCO3(-) and interconversion of dissolved CO2 and carbonic acid in the cytosol. In vitro, it shows non-selective gated cation channel activity and may be permeable to cations like K(+) and Na(+) in vivo. The protein is Aquaporin-1 of Canis lupus familiaris (Dog).